The primary structure comprises 266 residues: Non-structural maintenance of chromosomes element 1 homolog (266 aa).

Residues 1-102 are interaction with NSMCE3; it reads MQGSTRRMGV…SISKMATDFA (102 aa). Residues 191–232 form an RING-type; atypical zinc finger; sequence CNICHSLLIQGQSCETCGIRMHLPCVAKYFQSNAEPRCPHCN. The disordered stretch occupies residues 246 to 266; it reads EKERESGVLKSNKKSLRSRQH. Ser-251 is modified (phosphoserine). Over residues 256–266 the composition is skewed to basic residues; the sequence is SNKKSLRSRQH.

The protein belongs to the NSE1 family. In terms of assembly, component of the SMC5-SMC6 complex which consists at least of SMC5, SMC6, NSMCE2, NSMCE1, NSMCE4A or EID3 and NSMCE3. NSMCE1, NSMCE4A or EID3 and NSMCE3 probably form a subcomplex that bridges the head domains of the SMC5-SMC6 heterodimer. Interacts with NSMCE3. Interacts with MAGEF1. Ubiquitinated.

Its subcellular location is the nucleus. The protein resides in the chromosome. It localises to the telomere. It catalyses the reaction S-ubiquitinyl-[E2 ubiquitin-conjugating enzyme]-L-cysteine + [acceptor protein]-L-lysine = [E2 ubiquitin-conjugating enzyme]-L-cysteine + N(6)-ubiquitinyl-[acceptor protein]-L-lysine.. Its function is as follows. RING-type zinc finger-containing E3 ubiquitin ligase that assembles with melanoma antigen protein (MAGE) to catalyze the direct transfer of ubiquitin from E2 ubiquitin-conjugating enzyme to a specific substrate. Within MAGE-RING ubiquitin ligase complex, MAGE stimulates and specifies ubiquitin ligase activity likely through recruitment and/or stabilization of the E2 ubiquitin-conjugating enzyme at the E3:substrate complex. Involved in maintenance of genome integrity, DNA damage response and DNA repair. NSMCE3/MAGEG1 and NSMCE1 ubiquitin ligase are components of SMC5-SMC6 complex and may positively regulate homologous recombination-mediated DNA repair. MAGEF1-NSMCE1 ubiquitin ligase promotes proteasomal degradation of MMS19, a key component of the cytosolic iron-sulfur protein assembly (CIA) machinery. Down-regulation of MMS19 impairs the activity of several DNA repair and metabolism enzymes such as ERCC2/XPD, FANCJ, RTEL1 and POLD1 that require iron-sulfur clusters as cofactors. This chain is Non-structural maintenance of chromosomes element 1 homolog, found in Homo sapiens (Human).